The chain runs to 163 residues: Shikimate kinase (163 aa).

Position 10–15 (glycine 10–threonine 15) interacts with ATP. Residue threonine 14 coordinates Mg(2+). Substrate is bound by residues aspartate 28, arginine 52, and glycine 75. Residue arginine 116 participates in ATP binding. Arginine 134 lines the substrate pocket. An ATP-binding site is contributed by arginine 151.

It belongs to the shikimate kinase family. In terms of assembly, monomer. It depends on Mg(2+) as a cofactor.

The protein localises to the cytoplasm. The enzyme catalyses shikimate + ATP = 3-phosphoshikimate + ADP + H(+). Its pathway is metabolic intermediate biosynthesis; chorismate biosynthesis; chorismate from D-erythrose 4-phosphate and phosphoenolpyruvate: step 5/7. Functionally, catalyzes the specific phosphorylation of the 3-hydroxyl group of shikimic acid using ATP as a cosubstrate. The protein is Shikimate kinase of Streptococcus pyogenes serotype M49 (strain NZ131).